Here is a 122-residue protein sequence, read N- to C-terminus: Large ribosomal subunit protein uL14 (122 aa).

Belongs to the universal ribosomal protein uL14 family. Part of the 50S ribosomal subunit. Forms a cluster with proteins L3 and L19. In the 70S ribosome, L14 and L19 interact and together make contacts with the 16S rRNA in bridges B5 and B8.

Its function is as follows. Binds to 23S rRNA. Forms part of two intersubunit bridges in the 70S ribosome. In Psychrobacter arcticus (strain DSM 17307 / VKM B-2377 / 273-4), this protein is Large ribosomal subunit protein uL14.